We begin with the raw amino-acid sequence, 85 residues long: Dr hemagglutinin AFA-III operon regulatory protein AfaF (85 aa).

To E.coli PapI and DaaF.

Functionally, may have a possible regulatory function on the expression of the other AFA-III genes. The chain is Dr hemagglutinin AFA-III operon regulatory protein AfaF (afaF) from Escherichia coli.